We begin with the raw amino-acid sequence, 237 residues long: Uridylate kinase (237 aa).

An ATP-binding site is contributed by 11–14 (KLSG). Residue glycine 53 coordinates UMP. The ATP site is built by glycine 54 and arginine 58. UMP-binding positions include aspartate 73 and 134 to 141 (TGNPFFTT). The ATP site is built by threonine 161, tyrosine 167, and aspartate 170.

The protein belongs to the UMP kinase family. Homohexamer.

It localises to the cytoplasm. It carries out the reaction UMP + ATP = UDP + ADP. Its pathway is pyrimidine metabolism; CTP biosynthesis via de novo pathway; UDP from UMP (UMPK route): step 1/1. Its activity is regulated as follows. Inhibited by UTP. In terms of biological role, catalyzes the reversible phosphorylation of UMP to UDP. This chain is Uridylate kinase, found in Burkholderia cenocepacia (strain HI2424).